Reading from the N-terminus, the 935-residue chain is Isoleucine--tRNA ligase (935 aa).

The 'HIGH' region motif lies at 58 to 68 (PYANGSIHVGH). Glu-558 lines the L-isoleucyl-5'-AMP pocket. Residues 599 to 603 (KMSKS) carry the 'KMSKS' region motif. Position 602 (Lys-602) interacts with ATP. Zn(2+) contacts are provided by Cys-897, Cys-900, Cys-917, and Cys-920.

It belongs to the class-I aminoacyl-tRNA synthetase family. IleS type 1 subfamily. In terms of assembly, monomer. Zn(2+) is required as a cofactor.

The protein resides in the cytoplasm. It carries out the reaction tRNA(Ile) + L-isoleucine + ATP = L-isoleucyl-tRNA(Ile) + AMP + diphosphate. In terms of biological role, catalyzes the attachment of isoleucine to tRNA(Ile). As IleRS can inadvertently accommodate and process structurally similar amino acids such as valine, to avoid such errors it has two additional distinct tRNA(Ile)-dependent editing activities. One activity is designated as 'pretransfer' editing and involves the hydrolysis of activated Val-AMP. The other activity is designated 'posttransfer' editing and involves deacylation of mischarged Val-tRNA(Ile). The protein is Isoleucine--tRNA ligase of Francisella tularensis subsp. tularensis (strain WY96-3418).